Here is a 322-residue protein sequence, read N- to C-terminus: Thioredoxin reductase (322 aa).

Residues 11–14 (SGPA), 40–41 (IA), glutamine 45, asparagine 54, valine 87, and cysteine 145 each bind FAD. A disulfide bridge connects residues cysteine 142 and cysteine 145. Residue serine 192 is modified to Phosphoserine. Residue threonine 278 is modified to Phosphothreonine. Serine 279 is subject to Phosphoserine. FAD is bound by residues aspartate 288 and 295–297 (RQA).

Belongs to the class-II pyridine nucleotide-disulfide oxidoreductase family. In terms of assembly, homodimer. The cofactor is FAD.

It localises to the cytoplasm. It carries out the reaction [thioredoxin]-dithiol + NADP(+) = [thioredoxin]-disulfide + NADPH + H(+). The chain is Thioredoxin reductase (trr1) from Schizosaccharomyces pombe (strain 972 / ATCC 24843) (Fission yeast).